A 458-amino-acid polypeptide reads, in one-letter code: Ribulose bisphosphate carboxylase (458 aa).

Asn-111 contacts substrate. Lys-166 (proton acceptor) is an active-site residue. Substrate is bound at residue Lys-168. Residues Lys-191, Asp-193, and Glu-194 each contribute to the Mg(2+) site. Lys-191 carries the post-translational modification N6-carboxylysine. His-287 acts as the Proton acceptor in catalysis. The substrate site is built by Arg-288, His-321, and Ser-368.

Belongs to the RuBisCO large chain family. Type II subfamily. Homodimer. Mg(2+) serves as cofactor.

It catalyses the reaction 2 (2R)-3-phosphoglycerate + 2 H(+) = D-ribulose 1,5-bisphosphate + CO2 + H2O. It carries out the reaction D-ribulose 1,5-bisphosphate + O2 = 2-phosphoglycolate + (2R)-3-phosphoglycerate + 2 H(+). Its function is as follows. RuBisCO catalyzes two reactions: the carboxylation of D-ribulose 1,5-bisphosphate, the primary event in carbon dioxide fixation, as well as the oxidative fragmentation of the pentose substrate. Both reactions occur simultaneously and in competition at the same active site. The sequence is that of Ribulose bisphosphate carboxylase (cbbM) from Rhodobacter capsulatus (Rhodopseudomonas capsulata).